The following is a 92-amino-acid chain: Bombyxin A-5 (92 aa).

The first 19 residues, 1–19, serve as a signal peptide directing secretion; it reads MKLLLAIALMLTTVMWAST. Gln20 bears the Pyrrolidone carboxylic acid mark. 3 cysteine pairs are disulfide-bonded: Cys29-Cys79, Cys41-Cys92, and Cys78-Cys83. Residues 50–71 constitute a propeptide, c peptide like; sequence SDAQFASYGSAWLMPYSEGRDQ.

Belongs to the insulin family. As to quaternary structure, heterodimer of a B chain and an A chain linked by two disulfide bonds.

The protein localises to the secreted. Brain peptide responsible for activation of prothoracic glands to produce ecdysone in insects. This Bombyx mori (Silk moth) protein is Bombyxin A-5 (BBXA5).